A 400-amino-acid chain; its full sequence is Axin-like protein 1 (400 aa).

The 129-residue stretch at 4–132 (RSKFSIDRVL…TTTADVNTTW (129 aa)) folds into the RGS domain. 2 disordered regions span residues 190–233 (QETK…TLKV) and 278–306 (GTLE…GSEA). Over residues 194–210 (NSSETEEHAESPRKEKS) the composition is skewed to basic and acidic residues. The segment covering 287-298 (FTGTNNGFSTLQ) has biased composition (polar residues). The 88-residue stretch at 305-392 (EAPKMTVELR…RITAICRMCP (88 aa)) folds into the DIX domain.

In terms of assembly, interacts with bar-1, dsh-2, gsk-3, and mig-5.

Functionally, works in parallel with pry-1 in negatively regulating bar-1 signaling in vulval precursor cells and Q neuroblasts. Shown to have a role in excretory cell development. The sequence is that of Axin-like protein 1 from Caenorhabditis elegans.